Consider the following 383-residue polypeptide: S-adenosylmethionine synthase (383 aa).

Position 15 (His-15) interacts with ATP. Asp-17 contributes to the Mg(2+) binding site. Residue Glu-43 coordinates K(+). L-methionine contacts are provided by Glu-56 and Gln-99. Positions 99-109 (QSPDINQGVDR) are flexible loop. Residues 164 to 166 (DAK), 230 to 231 (RF), Asp-239, 245 to 246 (RK), Ala-262, and Lys-266 each bind ATP. Asp-239 provides a ligand contact to L-methionine. Lys-270 provides a ligand contact to L-methionine.

Belongs to the AdoMet synthase family. In terms of assembly, homotetramer; dimer of dimers. Mg(2+) is required as a cofactor. Requires K(+) as cofactor.

It is found in the cytoplasm. The catalysed reaction is L-methionine + ATP + H2O = S-adenosyl-L-methionine + phosphate + diphosphate. Its pathway is amino-acid biosynthesis; S-adenosyl-L-methionine biosynthesis; S-adenosyl-L-methionine from L-methionine: step 1/1. In terms of biological role, catalyzes the formation of S-adenosylmethionine (AdoMet) from methionine and ATP. The overall synthetic reaction is composed of two sequential steps, AdoMet formation and the subsequent tripolyphosphate hydrolysis which occurs prior to release of AdoMet from the enzyme. This chain is S-adenosylmethionine synthase, found in Shewanella baltica (strain OS155 / ATCC BAA-1091).